A 271-amino-acid chain; its full sequence is Orotidine 5'-phosphate decarboxylase (271 aa).

Catalysis depends on Lys-95, which acts as the Proton donor.

Belongs to the OMP decarboxylase family. Type 2 subfamily.

It catalyses the reaction orotidine 5'-phosphate + H(+) = UMP + CO2. Its pathway is pyrimidine metabolism; UMP biosynthesis via de novo pathway; UMP from orotate: step 2/2. The polypeptide is Orotidine 5'-phosphate decarboxylase (pyrF) (Ralstonia nicotianae (strain ATCC BAA-1114 / GMI1000) (Ralstonia solanacearum)).